The chain runs to 208 residues: Protein JLP2 (208 aa).

Basic residues predominate over residues 185–194 (AKKNQKKKNK). The tract at residues 185-208 (AKKNQKKKNKQSKDEVTDDMQLEV) is disordered.

This sequence belongs to the CCDC25 family.

Its subcellular location is the cytoplasm. The sequence is that of Protein JLP2 (JLP2) from Saccharomyces cerevisiae (strain ATCC 204508 / S288c) (Baker's yeast).